A 507-amino-acid chain; its full sequence is BPI fold-containing family C protein (507 aa).

Positions 1-23 (MCTKTIPVLWGCFLLWNLYVSSS) are cleaved as a signal peptide. Residues asparagine 79, asparagine 92, and asparagine 113 are each glycosylated (N-linked (GlcNAc...) asparagine). Cysteine 161 and cysteine 200 form a disulfide bridge. 7 N-linked (GlcNAc...) asparagine glycosylation sites follow: asparagine 213, asparagine 225, asparagine 257, asparagine 301, asparagine 355, asparagine 372, and asparagine 415.

Belongs to the BPI/LBP/Plunc superfamily. BPI/LBP family. In terms of tissue distribution, detected in the basal layer of the epidermis from inflammatory skin from psoriasis patients, but not in normal skin.

The protein localises to the secreted. The protein is BPI fold-containing family C protein (BPIFC) of Homo sapiens (Human).